The sequence spans 163 residues: Nucleotide-binding protein YajQ (163 aa).

This sequence belongs to the YajQ family.

Its function is as follows. Nucleotide-binding protein. This chain is Nucleotide-binding protein YajQ, found in Salmonella typhi.